The primary structure comprises 497 residues: Probable gamma-aminobutyrate transaminase 2, mitochondrial (497 aa).

The N-terminal 37 residues, 1–37 (MNLIKHAAFAASFQGETDCTSHASARKFSTSGSSPLL), are a transit peptide targeting the mitochondrion. A pyridoxal 5'-phosphate-binding site is contributed by 153-154 (GS). Tyr186 is a binding site for substrate. Asp293 provides a ligand contact to pyridoxal 5'-phosphate. Lys322 contacts substrate. Lys322 carries the post-translational modification N6-(pyridoxal phosphate)lysine.

Belongs to the class-III pyridoxal-phosphate-dependent aminotransferase family.

The protein resides in the mitochondrion. The enzyme catalyses 4-aminobutanoate + pyruvate = succinate semialdehyde + L-alanine. It carries out the reaction 4-aminobutanoate + glyoxylate = succinate semialdehyde + glycine. In terms of biological role, transaminase that degrades gamma-amino butyric acid (GABA). This Oryza sativa subsp. indica (Rice) protein is Probable gamma-aminobutyrate transaminase 2, mitochondrial.